The sequence spans 356 residues: Guanine nucleotide-binding protein alpha-2 subunit (356 aa).

Gly2 carries the N-myristoyl glycine lipid modification. The S-palmitoyl cysteine moiety is linked to residue Cys4. Residues 32 to 356 (RTVKLLLLGA…QSNLHKSGLY (325 aa)) form the G-alpha domain. Positions 35–48 (KLLLLGAGECGKST) are G1 motif. GTP contacts are provided by Glu43, Gly45, Lys46, Ser47, Thr48, Asp153, Leu178, Thr184, Gly206, Asn272, Lys273, Asp275, and Ala328. Ser47 serves as a coordination point for Mg(2+). Residues 176–184 (DTLLLRTKT) are G2 motif. Thr184 lines the Mg(2+) pocket. The tract at residues 199–208 (FRVFDVGGQR) is G3 motif. The interval 268-275 (ILFLNKKD) is G4 motif. The interval 326–331 (TCATDT) is G5 motif.

It belongs to the G-alpha family. G(q) subfamily. In terms of assembly, g proteins are composed of 3 units; alpha, beta and gamma. The alpha chain contains the guanine nucleotide binding site. Mg(2+) serves as cofactor.

Functionally, guanine nucleotide-binding proteins (G proteins) are involved as modulators or transducers in various transmembrane signaling systems. Involved in behavioral responses to P.aeruginosa by controlling the expression of daf-7, a member of the TGF-beta family, in ASJ sensory neurons. This Caenorhabditis elegans protein is Guanine nucleotide-binding protein alpha-2 subunit (gpa-2).